A 272-amino-acid polypeptide reads, in one-letter code: Orotidine 5'-phosphate decarboxylase (272 aa).

Catalysis depends on lysine 93, which acts as the Proton donor.

Belongs to the OMP decarboxylase family. Type 2 subfamily.

The catalysed reaction is orotidine 5'-phosphate + H(+) = UMP + CO2. The protein operates within pyrimidine metabolism; UMP biosynthesis via de novo pathway; UMP from orotate: step 2/2. This Roseiflexus sp. (strain RS-1) protein is Orotidine 5'-phosphate decarboxylase.